The sequence spans 172 residues: Diphosphoinositol polyphosphate phosphohydrolase 1 (172 aa).

Met1 bears the N-acetylmethionine mark. Residues Arg10, 18 to 20, and 39 to 41 contribute to the substrate site; these read KKR and SSR. The 126-residue stretch at 17 to 142 folds into the Nudix hydrolase domain; the sequence is YKKRAACLCF…KPVQASYFET (126 aa). Mg(2+)-binding residues include Gly50 and Glu66. Positions 51 to 72 match the Nudix box motif; the sequence is GGMEPEEEPSVAAVREVCEEAG. The active-site Proton acceptor is Glu69. Glu70 is a binding site for Mg(2+). Substrate is bound by residues 89 to 91, Arg115, and Lys133; that span reads RKH.

The protein belongs to the Nudix hydrolase family. DIPP subfamily. In terms of assembly, monomer. Mg(2+) is required as a cofactor. It depends on Mn(2+) as a cofactor. Zn(2+) serves as cofactor. Widely expressed. Expressed at higher level in brain, heart, pancreas and liver. Also expressed in placenta, lung and kidney.

It localises to the cytoplasm. The protein localises to the nucleus. The enzyme catalyses diphospho-myo-inositol polyphosphate + H2O = myo-inositol polyphosphate + phosphate.. The catalysed reaction is 5-diphospho-1D-myo-inositol 1,2,3,4,6-pentakisphosphate + H2O = 1D-myo-inositol hexakisphosphate + phosphate + H(+). It catalyses the reaction 3,5-bis(diphospho)-1D-myo-inositol 1,2,4,6-tetrakisphosphate + H2O = 3-diphospho-1D-myo-inositol 1,2,4,5,6-pentakisphosphate + phosphate + 2 H(+). It carries out the reaction [phosphate](n+1) + n H2O = (n+1) phosphate + n H(+). The enzyme catalyses P(1),P(5)-bis(5'-adenosyl) pentaphosphate + H2O = ADP + ATP + 2 H(+). The catalysed reaction is P(1),P(6)-bis(5'-adenosyl) hexaphosphate + H2O = 2 ATP + 2 H(+). It catalyses the reaction P(1),P(4)-bis(5'-adenosyl) tetraphosphate + H2O = AMP + ATP + 2 H(+). It carries out the reaction a 5'-end (N(7)-methyl 5'-triphosphoguanosine)-ribonucleoside in mRNA + H2O = N(7)-methyl-GMP + a 5'-end diphospho-ribonucleoside in mRNA + 2 H(+). The enzyme catalyses a 5'-end (N(7)-methyl 5'-triphosphoguanosine)-ribonucleoside in mRNA + H2O = N(7)-methyl-GDP + a 5'-end phospho-ribonucleoside in mRNA + 2 H(+). With respect to regulation, endopolyphospahatase activity is inhibited by NaF, NaPPi, beta-glycerol phosphate and heparin. 5-diphosphoinositol pentakisphosphate (5-InsP7) inhibits its mRNA decapping activity. Its function is as follows. Cleaves a beta-phosphate from the diphosphate groups in PP-InsP5 (diphosphoinositol pentakisphosphate) and [PP]2-InsP4 (bisdiphosphoinositol tetrakisphosphate), suggesting that it may play a role in signal transduction. InsP6 (inositol hexakisphosphate) is not a substrate. Acts as a negative regulator of the ERK1/2 pathway. Also able to catalyze the hydrolysis of dinucleoside oligophosphates, with diadenosine 5',5'''-P1,P6-hexaphosphate (Ap6A) and diadenosine 5',5'''- P1,P5-pentaphosphate (Ap5A) being the preferred substrates. The major reaction products are ADP and p4a from Ap6A and ADP and ATP from Ap5A. Also able to hydrolyze 5-phosphoribose 1-diphosphate. Acts as a decapping enzyme that modulates the stability of a subset of mRNAs implicated in cell motility. Hydrolyzes monomethylated capped RNA after both the alpha- and beta-phosphates generating m7GMP + ppRNA and m7GDP + pRNA. Can hydrolyze unmethylated capped RNAs. Divalent cations zinc, magnesium and manganese determine its substrate specificity. Exhibits diphosphoinositol polyphosphate phosphohydrolase in the presence of magnesium ions, diadenosine hexaphosphate hydrolase activity in the presence of manganese ions and endopolyphosphatase activity in the presence of zinc ions. Plays an important role in limiting DNA damage and maintaining cell survival upon oxidative stress via its endopolyphosphatase activity. The protein is Diphosphoinositol polyphosphate phosphohydrolase 1 of Homo sapiens (Human).